Consider the following 594-residue polypeptide: UvrABC system protein C (594 aa).

The GIY-YIG domain maps to 14-91; the sequence is DQPGCYLMKD…IKKHDPKYNI (78 aa). A UVR domain is found at 196–231; the sequence is KEVRSELETKMYEASEKLEFERAKELRDQIAHIDAI.

It belongs to the UvrC family. In terms of assembly, interacts with UvrB in an incision complex.

Its subcellular location is the cytoplasm. In terms of biological role, the UvrABC repair system catalyzes the recognition and processing of DNA lesions. UvrC both incises the 5' and 3' sides of the lesion. The N-terminal half is responsible for the 3' incision and the C-terminal half is responsible for the 5' incision. This Bacillus cereus (strain AH187) protein is UvrABC system protein C.